Reading from the N-terminus, the 310-residue chain is Cytochrome f (310 aa).

Residues 1-27 (MRRHLSLFLGSLVIGLALLIAPAASWA) form the signal peptide. Tyrosine 28, cysteine 48, cysteine 51, and histidine 52 together coordinate heme. A helical transmembrane segment spans residues 277–297 (IYGLLAFFAAVALAQIMLVLK).

Belongs to the cytochrome f family. As to quaternary structure, the 4 large subunits of the cytochrome b6-f complex are cytochrome b6, subunit IV (17 kDa polypeptide, PetD), cytochrome f and the Rieske protein, while the 4 small subunits are PetG, PetL, PetM and PetN. The complex functions as a dimer. It depends on heme as a cofactor.

The protein resides in the cellular thylakoid membrane. Component of the cytochrome b6-f complex, which mediates electron transfer between photosystem II (PSII) and photosystem I (PSI), cyclic electron flow around PSI, and state transitions. This Synechococcus sp. (strain CC9605) protein is Cytochrome f.